We begin with the raw amino-acid sequence, 552 residues long: Small ribosomal subunit protein bS1 (552 aa).

S1 motif domains are found at residues Thr31–Gln101, Asn116–Lys179, Thr200–Lys268, Gly285–Lys355, Gly372–Lys440, and Asp457–His521.

It belongs to the bacterial ribosomal protein bS1 family.

Its function is as follows. Binds mRNA; thus facilitating recognition of the initiation point. It is needed to translate mRNA with a short Shine-Dalgarno (SD) purine-rich sequence. This chain is Small ribosomal subunit protein bS1 (rpsA), found in Helicobacter pylori (strain J99 / ATCC 700824) (Campylobacter pylori J99).